A 705-amino-acid polypeptide reads, in one-letter code: MAKNDLHLTRNIGIMAHIDAGKTTTSERILFYTGLTHKIGEVHDGAATMDWMEQEQERGITITSAATTTRWKYAGDTYKINLIDTPGHVDFTAEVERSLRILDGAVAAYCAVGGVEPQSETVWRQADKYNVPRIAYVNKMDRSGADFFEVVRQMKAVLGANPCPVVIPIGAEENFKGLVDLIKMKAIYWHDETMGADYTIEEIPANLVDEANEWRDKMLEKVAEFDDALMEKYFDDPSTITEEEVLRALRNATVQMAVVPMLCGSSFKNKGVQTLLDYVCAFLPSPLDAENVVGTNPDTGAEEDRKPSEDDKTSALAFKIATDPYVGRLTFFRVYSGKIEAGSYIYNSRSGKKERVSRLFQMHSNKQNPVEVIGAGDIGAGVGFKDIHTGDTLCDETAPIVLESMDFPEPVIGIAVEPKTQKDMDKLSNGLAKLAEEDPTFTVKTDEQTGQTVISGMGELHLDIIIDRLKREFKVECNQGKPQVNYKEAITKTVNLREVYKKQSGGRGKFADIIVNIGPVDEDFTQGGLQFVDEVKGGNIPKEFIPSVQKGFQTAMKNGVLAGYPLDSLKVTLVDGSFHPVDSDQLSFEICAIQAYKNACAKAGPVLMEPIMKLEVVTPEENMGDVIGDLNKRRGQVEGMESSRSGARIVKAMVPLAEMFGYVTALRTITSGRATSSMVYSHHAQVSSSIAKAVLEEVKGRADLL.

Residues 7–287 form the tr-type G domain; sequence HLTRNIGIMA…YVCAFLPSPL (281 aa). GTP contacts are provided by residues 16-23, 84-88, and 138-141; these read AHIDAGKT, DTPGH, and NKMD. Residues 291 to 312 are disordered; sequence NVVGTNPDTGAEEDRKPSEDDK. The span at 302 to 312 shows a compositional bias: basic and acidic residues; it reads EEDRKPSEDDK.

The protein belongs to the TRAFAC class translation factor GTPase superfamily. Classic translation factor GTPase family. EF-G/EF-2 subfamily.

The protein resides in the cytoplasm. Functionally, catalyzes the GTP-dependent ribosomal translocation step during translation elongation. During this step, the ribosome changes from the pre-translocational (PRE) to the post-translocational (POST) state as the newly formed A-site-bound peptidyl-tRNA and P-site-bound deacylated tRNA move to the P and E sites, respectively. Catalyzes the coordinated movement of the two tRNA molecules, the mRNA and conformational changes in the ribosome. In Bacteroides fragilis (strain ATCC 25285 / DSM 2151 / CCUG 4856 / JCM 11019 / LMG 10263 / NCTC 9343 / Onslow / VPI 2553 / EN-2), this protein is Elongation factor G.